A 443-amino-acid polypeptide reads, in one-letter code: Carbohydrate sulfotransferase 9 (443 aa).

The Cytoplasmic segment spans residues 1-12 (MQPSEMVMNPKQ). The helical; Signal-anchor for type II membrane protein transmembrane segment at 13-33 (VFLSVLIFGVAGLLLFMYLQV) threads the bilayer. Residues 34 to 443 (WIEEQHTGRV…LMFNYTTPFL (410 aa)) lie on the Lumenal side of the membrane. Positions 108–128 (LTKTSHSQGGDQALSKSTGSP) are enriched in polar residues. Residues 108–132 (LTKTSHSQGGDQALSKSTGSPTEKL) are disordered. N-linked (GlcNAc...) asparagine glycosylation is present at Asn-159. A 3'-phosphoadenylyl sulfate-binding site is contributed by 220 to 226 (PKAGCSN). Residue Asn-243 is glycosylated (N-linked (GlcNAc...) asparagine). Position 280–288 (280–288 (RDPMERLVS)) interacts with 3'-phosphoadenylyl sulfate. Asn-324 and Asn-437 each carry an N-linked (GlcNAc...) asparagine glycan.

This sequence belongs to the sulfotransferase 2 family. In terms of tissue distribution, highly expressed in trachea. Also expressed in fetal lung, adult pancreas, testis and salivary gland. Expressed at low level in pituitary gland, apex of the heart, adult lung, prostate and mammary gland. Weakly or not expressed in heart, liver and spinal cord.

The protein localises to the golgi apparatus membrane. The protein resides in the secreted. Catalyzes the transfer of sulfate to position 4 of non-reducing N-acetylgalactosamine (GalNAc) residues in both N-glycans and O-glycans. Participates in biosynthesis of glycoprotein hormones lutropin and thyrotropin, by mediating sulfation of their carbohydrate structures. Has a higher activity toward carbonic anhydrase VI than toward lutropin. Only active against terminal GalNAcbeta1,GalNAcbeta. Isoform 2, but not isoform 1, is active toward chondroitin. The chain is Carbohydrate sulfotransferase 9 (CHST9) from Homo sapiens (Human).